The primary structure comprises 210 residues: Ribonuclease HII (210 aa).

The RNase H type-2 domain maps to 16–207 (AIVVGVDEVG…VKKCIISTKN (192 aa)). A divalent metal cation contacts are provided by Asp22, Glu23, and Asp116.

The protein belongs to the RNase HII family. Requires Mn(2+) as cofactor. Mg(2+) is required as a cofactor.

It is found in the cytoplasm. The enzyme catalyses Endonucleolytic cleavage to 5'-phosphomonoester.. Endonuclease that specifically degrades the RNA of RNA-DNA hybrids. The chain is Ribonuclease HII from Anaplasma phagocytophilum (strain HZ).